The following is a 336-amino-acid chain: Atypical chemokine receptor 1 (336 aa).

Over 1–63 (MGNCLHQAEL…CSLLNDSSLP (63 aa)) the chain is Extracellular. 4 N-linked (GlcNAc...) asparagine glycosylation sites follow: N16, N27, N33, and N58. Cystine bridges form between C51–C276 and C129–C195. A helical transmembrane segment spans residues 64 to 84 (FFILASDLGILASSTVLFMLF). At 85 to 95 (RPLFRWQLCPG) the chain is on the cytoplasmic side. Residues 96-116 (WPVLAQLAVGSALFSIVVPIL) traverse the membrane as a helical segment. Residues 117–129 (APGLGNTHSSALC) are Extracellular-facing. The helical transmembrane segment at 130–153 (SLGYCVWYGSAFAQALLLGCHASL) threads the bilayer. Topologically, residues 154–166 (GPKLGAGQVPGLT) are cytoplasmic. A helical membrane pass occupies residues 167 to 187 (LGLPVGLWGATALLTLPITLA). Over 188-207 (SGASDGLCTPIYSTELEALQ) the chain is Extracellular. The chain crosses the membrane as a helical span at residues 208–228 (ATHAVACFAIFVLLPLGLFGA). Over 229–244 (KGLKKALGMGPGPWMN) the chain is Cytoplasmic. The helical transmembrane segment at 245–265 (ILWVWFIFWWPHGLVLGLDFL) threads the bilayer. At 266–287 (VGSKLSLLPTCLAQQVLDLLLN) the chain is on the extracellular side. The chain crosses the membrane as a helical span at residues 288–308 (LAEALAIVHCVATPLLLALFC). Residues 309-336 (HQTTRTLLPSLPLPERWSSPVDTLGSKS) are Cytoplasmic-facing.

Belongs to the G-protein coupled receptor 1 family. Atypical chemokine receptor subfamily.

Its subcellular location is the early endosome. The protein resides in the recycling endosome. It localises to the membrane. Atypical chemokine receptor that controls chemokine levels and localization via high-affinity chemokine binding that is uncoupled from classic ligand-driven signal transduction cascades, resulting instead in chemokine sequestration, degradation, or transcytosis. Also known as interceptor (internalizing receptor) or chemokine-scavenging receptor or chemokine decoy receptor. Has a promiscuous chemokine-binding profile, interacting with inflammatory chemokines of both the CXC and the CC subfamilies but not with homeostatic chemokines. Acts as a receptor for chemokines including CCL2, CCL5, CCL7, CCL11, CCL13, CCL14, CCL17, CXCL5, CXCL6, IL8/CXCL8, CXCL11, GRO, RANTES, MCP-1 and TARC. May regulate chemokine bioavailability and, consequently, leukocyte recruitment through two distinct mechanisms: when expressed in endothelial cells, it sustains the abluminal to luminal transcytosis of tissue-derived chemokines and their subsequent presentation to circulating leukocytes; when expressed in erythrocytes, serves as blood reservoir of cognate chemokines but also as a chemokine sink, buffering potential surges in plasma chemokine levels. In Saimiri boliviensis boliviensis (Bolivian squirrel monkey), this protein is Atypical chemokine receptor 1 (ACKR1).